A 617-amino-acid polypeptide reads, in one-letter code: Dopamine beta-hydroxylase (617 aa).

The Cytoplasmic portion of the chain corresponds to 1-16; sequence MPALSRWASLPGPSMR. A helical; Signal-anchor for type II membrane protein membrane pass occupies residues 17-37; that stretch reads EAAFMYSTAVAIFLVILVAAL. At 38-617 the chain is on the intragranular side; the sequence is QGSAPRESPL…TVVSIGGGKG (580 aa). Positions 57–173 constitute a DOMON domain; it reads GSLELSWNVS…GTVHLVYGIL (117 aa). Asn-64 carries an N-linked (GlcNAc...) asparagine glycan. Cystine bridges form between Cys-154–Cys-596, Cys-232–Cys-283, Cys-269–Cys-295, Cys-390–Cys-503, Cys-394–Cys-565, and Cys-466–Cys-488. An N-linked (GlcNAc...) (complex) asparagine glycan is attached at Asn-184. Tyr-230 is a catalytic residue. Cu(2+) contacts are provided by His-262 and His-263. Residue His-333 coordinates Cu(2+). N-linked (GlcNAc...) asparagine glycosylation is present at Asn-344. Residue His-412 is part of the active site. Positions 412, 414, and 487 each coordinate Cu(2+). A glycan (N-linked (GlcNAc...) asparagine) is linked at Asn-566. The segment at 590–617 is disordered; the sequence is EEPTPQCPTSQGRSPAGPTVVSIGGGKG.

This sequence belongs to the copper type II ascorbate-dependent monooxygenase family. Homotetramer; composed of two disulfide-linked dimers. The cofactor is Cu(2+). N-glycosylated. Post-translationally, proteolytic cleavage after the membrane-anchor leads to the release of the soluble form.

It is found in the cytoplasmic vesicle. The protein localises to the secretory vesicle lumen. The protein resides in the secretory vesicle. Its subcellular location is the chromaffin granule lumen. It localises to the secreted. It is found in the secretory vesicle membrane. The protein localises to the chromaffin granule membrane. It catalyses the reaction dopamine + 2 L-ascorbate + O2 = (R)-noradrenaline + 2 monodehydro-L-ascorbate radical + H2O. It participates in catecholamine biosynthesis; (R)-noradrenaline biosynthesis; (R)-noradrenaline from dopamine: step 1/1. In terms of biological role, catalyzes the hydroxylation of dopamine to noradrenaline (also known as norepinephrine), and is thus vital for regulation of these neurotransmitters. This is Dopamine beta-hydroxylase (DBH) from Homo sapiens (Human).